The sequence spans 549 residues: Nectin-3 (549 aa).

The N-terminal stretch at 1 to 57 (MARTLRPSPLCPGGGKAQLSSASLLGAGLLLQPPTPPPLLLLLFPLLLFSRLCGALA) is a signal peptide. Topologically, residues 58-404 (GPIIVEPHVT…ATIKDDTIAT (347 aa)) are extracellular. In terms of domain architecture, Ig-like V-type spans 59–165 (PIIVEPHVTA…GNAQSSTTVT (107 aa)). Residues asparagine 73, asparagine 83, asparagine 125, asparagine 186, asparagine 222, and asparagine 331 are each glycosylated (N-linked (GlcNAc...) asparagine). Cysteines 78 and 148 form a disulfide. 2 Ig-like C2-type domains span residues 170–258 (PTVS…KDIR) and 269–354 (PEVS…KVIY). Cystine bridges form between cysteine 193/cysteine 246 and cysteine 291/cysteine 338. A helical membrane pass occupies residues 405-425 (IIASVVGGALFIVLVSVLAGI). The Cytoplasmic portion of the chain corresponds to 426–549 (FCYRRRRTFR…SVISRREWYV (124 aa)).

This sequence belongs to the nectin family. As to quaternary structure, cis- and trans-homodimer. Can form trans-heterodimers with NECTIN1, NECTIN2, PVR, IGSF4B/Necl-1 and with IGSF4. Interaction between NECTIN1 and NECTIN3 on the pre- and postsynaptic sites, respectively, initiates the formation of puncta adherentia junctions between axons and dendrites. Interacts (via Cytoplasmic domain) with AFDN, providing a connection with the actin cytoskeleton. Binds with low affinity to TIGIT. In terms of assembly, (Microbial infection) Interacts with C.difficile toxin TcdB, suggesting that it may contribute to TcdB toxin entry into cells. It was however shown that NECTIN3/PVRL3 does not act as a major receptor for TcdB. In terms of tissue distribution, predominantly expressed in testis and placenta as well as in many cell lines, including epithelial cell lines.

The protein localises to the cell membrane. It is found in the postsynaptic cell membrane. The protein resides in the cell junction. Its subcellular location is the adherens junction. Its function is as follows. Cell adhesion molecule that promotes cell-cell adhesion through heterophilic trans-interactions with nectins-like or other nectins, such as trans-interaction with NECTIN2 at Sertoli-spermatid junctions. Trans-interaction with PVR induces activation of CDC42 and RAC small G proteins through common signaling molecules such as SRC and RAP1. Induces endocytosis-mediated down-regulation of PVR from the cell surface, resulting in reduction of cell movement and proliferation. Involved in axon guidance by promoting contacts between the commissural axons and the floor plate cells. Also involved in the formation of cell-cell junctions, including adherens junctions and synapses. Promotes formation of checkerboard-like cellular pattern of hair cells and supporting cells in the auditory epithelium via heterophilic interaction with NECTIN1: NECTIN1 is present in the membrane of hair cells and associates with NECTIN3 on supporting cells, thereby mediating heterotypic adhesion between these two cell types. Plays a role in the morphology of the ciliary body. This is Nectin-3 from Homo sapiens (Human).